Consider the following 234-residue polypeptide: Biosynthetic peptidoglycan transglycosylase (234 aa).

The helical transmembrane segment at 8–28 (VIGCFAAGVVALNLYFFAAIA) threads the bilayer.

The protein belongs to the glycosyltransferase 51 family.

The protein resides in the cell inner membrane. It carries out the reaction [GlcNAc-(1-&gt;4)-Mur2Ac(oyl-L-Ala-gamma-D-Glu-L-Lys-D-Ala-D-Ala)](n)-di-trans,octa-cis-undecaprenyl diphosphate + beta-D-GlcNAc-(1-&gt;4)-Mur2Ac(oyl-L-Ala-gamma-D-Glu-L-Lys-D-Ala-D-Ala)-di-trans,octa-cis-undecaprenyl diphosphate = [GlcNAc-(1-&gt;4)-Mur2Ac(oyl-L-Ala-gamma-D-Glu-L-Lys-D-Ala-D-Ala)](n+1)-di-trans,octa-cis-undecaprenyl diphosphate + di-trans,octa-cis-undecaprenyl diphosphate + H(+). It functions in the pathway cell wall biogenesis; peptidoglycan biosynthesis. In terms of biological role, peptidoglycan polymerase that catalyzes glycan chain elongation from lipid-linked precursors. This is Biosynthetic peptidoglycan transglycosylase from Ralstonia nicotianae (strain ATCC BAA-1114 / GMI1000) (Ralstonia solanacearum).